Here is a 218-residue protein sequence, read N- to C-terminus: Ribose-5-phosphate isomerase A (218 aa).

Substrate is bound by residues 28–31 (TGST), 81–84 (DGAD), and 94–97 (KGGG). Glu-103 serves as the catalytic Proton acceptor. Lys-121 contributes to the substrate binding site.

The protein belongs to the ribose 5-phosphate isomerase family. As to quaternary structure, homodimer.

The catalysed reaction is aldehydo-D-ribose 5-phosphate = D-ribulose 5-phosphate. It functions in the pathway carbohydrate degradation; pentose phosphate pathway; D-ribose 5-phosphate from D-ribulose 5-phosphate (non-oxidative stage): step 1/1. Catalyzes the reversible conversion of ribose-5-phosphate to ribulose 5-phosphate. In Shewanella woodyi (strain ATCC 51908 / MS32), this protein is Ribose-5-phosphate isomerase A.